The primary structure comprises 342 residues: scyllo-inositol 2-dehydrogenase (NAD(+)) (342 aa).

The protein belongs to the Gfo/Idh/MocA family.

The enzyme catalyses scyllo-inositol + NAD(+) = scyllo-inosose + NADH + H(+). It functions in the pathway polyol metabolism. In terms of biological role, catalyzes the reversible NAD(+)-dependent oxidation of scyllo-inositol (SI) to 2,4,6/3,5-pentahydroxycyclohexanone (scyllo-inosose or SIS). Is required for SI catabolism that allows B.subtilis to utilize SI as the sole carbon source for growth. Cannot use NADP(+) instead of NAD(+). The sequence is that of scyllo-inositol 2-dehydrogenase (NAD(+)) from Bacillus subtilis (strain 168).